We begin with the raw amino-acid sequence, 640 residues long: LRR receptor kinase SERL2 (640 aa).

A signal peptide spans 1-22 (MEPPFFLLLLLLVVSSSSPSAA). Residues 23–241 (LLSAKGVNNE…AARDRGHKFA (219 aa)) are Extracellular-facing. Asn94 and Asn107 each carry an N-linked (GlcNAc...) asparagine glycan. LRR repeat units follow at residues 95–119 (LTNL…IGRL), 120–143 (ENLK…VGHL), 145–167 (SLQY…SANL), and 168–191 (SHLV…LART). Residues Asn153, Asn166, Asn179, and Asn222 are each glycosylated (N-linked (GlcNAc...) asparagine). Residues 242 to 262 (VAFGSTAGCMGLLLLAAGFLF) traverse the membrane as a helical segment. At 263–640 (WWRHRRNRQI…VQAVELSGPR (378 aa)) the chain is on the cytoplasmic side. In terms of domain architecture, Protein kinase spans 304–583 (FSGKNILGKG…EGDGLADRWE (280 aa)). ATP is bound by residues 310-318 (LGKGGFGNV) and Lys332. Asp427 serves as the catalytic Proton acceptor.

This sequence belongs to the protein kinase superfamily. Ser/Thr protein kinase family. In terms of assembly, interacts with MSBP1.

Its subcellular location is the cell membrane. It catalyses the reaction L-seryl-[protein] + ATP = O-phospho-L-seryl-[protein] + ADP + H(+). The enzyme catalyses L-threonyl-[protein] + ATP = O-phospho-L-threonyl-[protein] + ADP + H(+). Functionally, LRR receptor kinase that may be involved in defense response. The polypeptide is LRR receptor kinase SERL2 (Oryza sativa subsp. japonica (Rice)).